The following is a 907-amino-acid chain: Leucine-rich repeat-containing G-protein coupled receptor 5 (907 aa).

The first 21 residues, 1–21, serve as a signal peptide directing secretion; it reads MDTSRLGVLLSLPVLLQLATG. The Extracellular portion of the chain corresponds to 22-561; sequence GSSPRSGVLL…EHLLDGWLIR (540 aa). The LRRNT domain occupies 25 to 66; the sequence is PRSGVLLRGCPTHCHCEPDGRMLLRVDCSDLGLSELPSNLSV. Disulfide bonds link Cys-34–Cys-40 and Cys-38–Cys-52. N-linked (GlcNAc...) asparagine glycosylation is found at Asn-63 and Asn-77. LRR repeat units lie at residues 67-90, 91-112, 115-136, 139-160, 163-184, 187-208, 211-232, 235-256, 258-279, 282-303, 306-328, 329-350, 353-374, 375-396, 399-420, and 423-446; these read FTSY…PSLR, FLEE…AFTG, SLKV…ALQN, SLQS…CFSG, SLRH…AFRS, ALQA…AFGN, SLVV…CFDG, SLET…IRTL, NLKE…AFVG, SLIT…AFQH, ELRT…TGTA, NLES…VCNQ, NLQV…SVCQ, KLQK…TFQQ, SLRS…AFST, and SLIK…HGLT. Asn-208 carries an N-linked (GlcNAc...) asparagine glycan. Residues Cys-348 and Cys-373 are joined by a disulfide bond. Cys-479 and Cys-541 are disulfide-bonded. The N-linked (GlcNAc...) asparagine glycan is linked to Asn-500. Residues 562–582 form a helical membrane-spanning segment; sequence IGVWTIAVLALTCNALVTSTV. The Cytoplasmic segment spans residues 583–593; the sequence is FRSPLYISPIK. Residues 594-614 form a helical membrane-spanning segment; sequence LLIGVIAAVNMLTGVSSAVLA. The Extracellular segment spans residues 615–638; the sequence is GVDAFTFGSFARHGAWWENGVGCH. A disulfide bridge connects residues Cys-637 and Cys-712. The helical transmembrane segment at 639–659 threads the bilayer; sequence VIGFLSIFASESSVFLLTLAA. The Cytoplasmic segment spans residues 660–682; the sequence is LERGFSVKYSAKFETKAPFSSLK. A helical membrane pass occupies residues 683–703; it reads VIILLCALLALTMAAVPLLGG. Residues 704 to 722 lie on the Extracellular side of the membrane; it reads SKYGASPLCLPLPFGEPST. A helical membrane pass occupies residues 723–743; the sequence is MGYMVALILLNSLCFLMMTIA. Residues 744 to 767 are Cytoplasmic-facing; sequence YTKLYCNLDKGDLENIWDCSMVKH. The chain crosses the membrane as a helical span at residues 768–788; it reads IALLLFTNCILNCPVAFLSFS. Residues 789–802 are Extracellular-facing; that stretch reads SLINLTFISPEVIK. N-linked (GlcNAc...) asparagine glycosylation is present at Asn-792. The chain crosses the membrane as a helical span at residues 803 to 823; it reads FILLVVVPLPACLNPLLYILF. The Cytoplasmic segment spans residues 824-907; that stretch reads NPHFKEDLVS…LSSVAFVPCL (84 aa).

It belongs to the G-protein coupled receptor 1 family. As to quaternary structure, identified in a complex composed of RNF43, LGR5 and RSPO1. Also interacts with other R-spondin ligands, including RSPO2, RSPO3 and RSPO4. Expressed in skeletal muscle, placenta, spinal cord, and various region of brain. Expressed at the base of crypts in colonic and small mucosa stem cells. In premalignant cancer expression is not restricted to the cript base. Overexpressed in cancers of the ovary, colon and liver.

It localises to the cell membrane. Its subcellular location is the golgi apparatus. It is found in the trans-Golgi network membrane. In terms of biological role, receptor for R-spondins that potentiates the canonical Wnt signaling pathway and acts as a stem cell marker of the intestinal epithelium and the hair follicle. Upon binding to R-spondins (RSPO1, RSPO2, RSPO3 or RSPO4), associates with phosphorylated LRP6 and frizzled receptors that are activated by extracellular Wnt receptors, triggering the canonical Wnt signaling pathway to increase expression of target genes. In contrast to classical G-protein coupled receptors, does not activate heterotrimeric G-proteins to transduce the signal. Involved in the development and/or maintenance of the adult intestinal stem cells during postembryonic development. The chain is Leucine-rich repeat-containing G-protein coupled receptor 5 (LGR5) from Homo sapiens (Human).